A 390-amino-acid polypeptide reads, in one-letter code: Elongation factor Tu 2 (390 aa).

In terms of domain architecture, tr-type G spans 10–201 (KPHVNVGTIG…LDDYVEVPPR (192 aa)). The G1 stretch occupies residues 19–26 (GHVDHGKT). Residue 19–26 (GHVDHGKT) coordinates GTP. Thr-26 contacts Mg(2+). Residues 55 to 59 (GITIA) are G2. The interval 76 to 79 (DCPG) is G3. Residues 76–80 (DCPGH) and 131–134 (NKAD) each bind GTP. Residues 131–134 (NKAD) form a G4 region. The tract at residues 168-170 (SAL) is G5.

This sequence belongs to the TRAFAC class translation factor GTPase superfamily. Classic translation factor GTPase family. EF-Tu/EF-1A subfamily. As to quaternary structure, monomer.

It localises to the cytoplasm. The enzyme catalyses GTP + H2O = GDP + phosphate + H(+). Its function is as follows. GTP hydrolase that promotes the GTP-dependent binding of aminoacyl-tRNA to the A-site of ribosomes during protein biosynthesis. In Wolbachia sp. subsp. Brugia malayi (strain TRS), this protein is Elongation factor Tu 2.